Reading from the N-terminus, the 1028-residue chain is Exportin-T (1028 aa).

It belongs to the exportin family.

The protein localises to the nucleus. Its subcellular location is the cytoplasm. TRNA nucleus export receptor which facilitates tRNA translocation across the nuclear pore complex. Involved in pre-tRNA splicing, probably by affecting the interaction of pre-tRNA with splicing endonuclease. The protein is Exportin-T (los1) of Aspergillus terreus (strain NIH 2624 / FGSC A1156).